The primary structure comprises 284 residues: Diaminopimelate epimerase (284 aa).

Substrate contacts are provided by N14 and N67. The active-site Proton donor is C76. Residues 77–78 (GN), N166, N199, and 217–218 (ER) each bind substrate. C226 (proton acceptor) is an active-site residue. 227–228 (GT) provides a ligand contact to substrate.

It belongs to the diaminopimelate epimerase family. Homodimer.

Its subcellular location is the cytoplasm. It carries out the reaction (2S,6S)-2,6-diaminopimelate = meso-2,6-diaminopimelate. The protein operates within amino-acid biosynthesis; L-lysine biosynthesis via DAP pathway; DL-2,6-diaminopimelate from LL-2,6-diaminopimelate: step 1/1. Its function is as follows. Catalyzes the stereoinversion of LL-2,6-diaminopimelate (L,L-DAP) to meso-diaminopimelate (meso-DAP), a precursor of L-lysine and an essential component of the bacterial peptidoglycan. This is Diaminopimelate epimerase from Bacillus subtilis (strain 168).